A 328-amino-acid polypeptide reads, in one-letter code: Phosphate acyltransferase (328 aa).

It belongs to the PlsX family. In terms of assembly, homodimer. Probably interacts with PlsY.

The protein resides in the cytoplasm. It catalyses the reaction a fatty acyl-[ACP] + phosphate = an acyl phosphate + holo-[ACP]. It participates in lipid metabolism; phospholipid metabolism. In terms of biological role, catalyzes the reversible formation of acyl-phosphate (acyl-PO(4)) from acyl-[acyl-carrier-protein] (acyl-ACP). This enzyme utilizes acyl-ACP as fatty acyl donor, but not acyl-CoA. In Campylobacter jejuni subsp. doylei (strain ATCC BAA-1458 / RM4099 / 269.97), this protein is Phosphate acyltransferase.